The chain runs to 185 residues: MAFSYCSSSLFVSLLLVILFISPLSQRPSVKAENHLISEICPKTRNPSLCLQALESDPRSASKDLKGLGQFSIDIAQASAKQTSKIIASLTNQATDPKLKGRYETCSENYADAIDSLGQAKQFLTSGDYNSLNIYASAAFDGAGTCEDSFEGPPNIPTQLHQADLKLEDLCDIVLVISNLLPGSK.

The N-terminal stretch at 1 to 32 is a signal peptide; sequence MAFSYCSSSLFVSLLLVILFISPLSQRPSVKA. Intrachain disulfides connect Cys41/Cys50 and Cys106/Cys146. A propeptide is located at residue Lys185.

Belongs to the PMEI family. In terms of tissue distribution, fruit.

The protein localises to the cytoplasm. Its function is as follows. Inhibits pectin methylesterase; may be involved in the regulation of fruit ripening. The sequence is that of Pectinesterase inhibitor (PMEI) from Actinidia deliciosa (Kiwi).